The primary structure comprises 271 residues: Nus factor SuhB (271 aa).

The Mg(2+) site is built by Glu-67, Asp-86, and Leu-88. Position 67 (Glu-67) interacts with substrate. Residues 88 to 91, Arg-187, and Asp-216 each bind substrate; that span reads LDGT.

It belongs to the inositol monophosphatase superfamily. Homodimer. The rRNA transcription and antitermination complex (rrnTAC) consists of RNA polymerase (RNAP), NusA, NusB, NusE (rpsJ), NusG, SubB, ribosomal protein S4, DNA and precursor rRNA; S4 is more flexible than other subunits. Interacts with the ribosome and with RNA polymerase. Requires Mg(2+) as cofactor.

Its subcellular location is the cytoplasm. The enzyme catalyses a myo-inositol phosphate + H2O = myo-inositol + phosphate. Functionally, part of the processive rRNA transcription and antitermination complex (rrnTAC). The complex forms an RNA-chaperone ring around the RNA exit tunnel of RNA polymerase (RNAP). It supports rapid transcription and antitermination of rRNA operons, cotranscriptional rRNA folding, and annealing of distal rRNA regions to allow correct ribosome biogenesis. This subunit may play a central role in organizing the structure. A ribosome-associated protein, deletion of which alters the expression of 494 genes, suggesting a role in global gene regulation. Involved in control of pathogenesis-related genes. Required for the activation of virulence factors associated with acute infections (type 3 secretion system, T3SS) while suppressing virulence factors associated with chronic infections (biofilm formation and type 6 secretion system, T6SS). It probably acts at a post-transcriptional level. This Pseudomonas aeruginosa (strain ATCC 15692 / DSM 22644 / CIP 104116 / JCM 14847 / LMG 12228 / 1C / PRS 101 / PAO1) protein is Nus factor SuhB.